Here is a 286-residue protein sequence, read N- to C-terminus: Bifunctional protein FolD (286 aa).

Residues 165–167 (GRS), serine 190, and valine 231 each bind NADP(+).

It belongs to the tetrahydrofolate dehydrogenase/cyclohydrolase family. In terms of assembly, homodimer.

The catalysed reaction is (6R)-5,10-methylene-5,6,7,8-tetrahydrofolate + NADP(+) = (6R)-5,10-methenyltetrahydrofolate + NADPH. It catalyses the reaction (6R)-5,10-methenyltetrahydrofolate + H2O = (6R)-10-formyltetrahydrofolate + H(+). It participates in one-carbon metabolism; tetrahydrofolate interconversion. Catalyzes the oxidation of 5,10-methylenetetrahydrofolate to 5,10-methenyltetrahydrofolate and then the hydrolysis of 5,10-methenyltetrahydrofolate to 10-formyltetrahydrofolate. This is Bifunctional protein FolD from Bacillus cereus (strain AH187).